Consider the following 433-residue polypeptide: Xylose isomerase (433 aa).

Catalysis depends on residues His-99 and Asp-102. Glu-230, Glu-266, His-269, Asp-294, Asp-305, Asp-307, and Asp-337 together coordinate Mg(2+).

This sequence belongs to the xylose isomerase family. Homotetramer. Mg(2+) is required as a cofactor.

Its subcellular location is the cytoplasm. It catalyses the reaction alpha-D-xylose = alpha-D-xylulofuranose. In Roseobacter denitrificans (strain ATCC 33942 / OCh 114) (Erythrobacter sp. (strain OCh 114)), this protein is Xylose isomerase.